We begin with the raw amino-acid sequence, 356 residues long: Myricetin 7/4'-O-methyltransferase 2 (356 aa).

Asp222 contacts S-adenosyl-L-methionine. Catalysis depends on His260, which acts as the Proton acceptor.

This sequence belongs to the class I-like SAM-binding methyltransferase superfamily. Cation-independent O-methyltransferase family. In terms of assembly, homodimer.

It catalyses the reaction quercetin + S-adenosyl-L-methionine = rhamnetin + S-adenosyl-L-homocysteine + H(+). The enzyme catalyses kaempferol + S-adenosyl-L-methionine = kaempferide + S-adenosyl-L-homocysteine + H(+). The catalysed reaction is myricetin + S-adenosyl-L-methionine = 7-O-methylmyricetin + S-adenosyl-L-homocysteine + H(+). It carries out the reaction kaempferide + S-adenosyl-L-methionine = 7,4'-O-dimethylkaempferol + S-adenosyl-L-homocysteine + H(+). It catalyses the reaction isorhamnetin + S-adenosyl-L-methionine = 3',4'-O-dimethylquercetin + S-adenosyl-L-homocysteine + 2 H(+). The enzyme catalyses 3',4',5,7-tetrahydroxy-3-methoxyflavone + S-adenosyl-L-methionine = 3',4',5-trihydroxy-3,7-dimethoxyflavone + S-adenosyl-L-homocysteine + H(+). The catalysed reaction is rhamnetin + S-adenosyl-L-methionine = 7,4'-O-dimethylquercetin + S-adenosyl-L-homocysteine + H(+). It carries out the reaction syringetin + S-adenosyl-L-methionine = 7,3',5'-O-trimethylmyricetin + S-adenosyl-L-homocysteine + H(+). It catalyses the reaction 3',4',5'-O-trimethylmyricetin + S-adenosyl-L-methionine = 7,3',4',5'-O-tetramethylmyricetin + S-adenosyl-L-homocysteine. It functions in the pathway flavonoid metabolism. Its function is as follows. Flavonoid 7/4'-O-methyltransferase involved in the biosynthesis of polymethoxylated flavonoids natural products such as myricetin derivatives, aroma compounds possessing antioxidant properties and exhibiting pharmacological activities such as anti-carcinogen, anti-viral, anti-thrombotic, anti-diabetic, anti-atherosclerotic, and anti-inflammatory effects. Catalyzes S-adenosylmethionine-dependent regioselective 7/4'-O-methylation of flavonoids; active on various hydroxylated flavonoid substrates. The sequence is that of Myricetin 7/4'-O-methyltransferase 2 from Solanum lycopersicum (Tomato).